Consider the following 368-residue polypeptide: Outer membrane protein assembly factor BamC (368 aa).

A signal peptide spans 1–18 (MTTKFFIGTAIAVSVLSA). Cys19 carries the N-palmitoyl cysteine lipid modification. The S-diacylglycerol cysteine moiety is linked to residue Cys19.

This sequence belongs to the BamC family. In terms of assembly, part of the Bam complex.

The protein localises to the cell outer membrane. Its function is as follows. Part of the outer membrane protein assembly complex, which is involved in assembly and insertion of beta-barrel proteins into the outer membrane. In Pseudoalteromonas atlantica (strain T6c / ATCC BAA-1087), this protein is Outer membrane protein assembly factor BamC.